Consider the following 325-residue polypeptide: Dehydrogenase/reductase SDR family member 7B (325 aa).

Topologically, residues 1 to 17 (MISPSSRKGMLKERAMD) are cytoplasmic. The chain crosses the membrane as a helical; Signal-anchor for type II membrane protein span at residues 18–38 (LVTQTTILPLLFGCLGIFSLF). Over 39–325 (RLLQRTRSKA…ARKERKSKNS (287 aa)) the chain is Lumenal. NAD(+)-binding residues include Ser62 and Leu64. Residue Ser194 participates in substrate binding. NAD(+) contacts are provided by Tyr207, Lys211, and Thr242. Tyr207 functions as the Proton acceptor in the catalytic mechanism.

The protein belongs to the short-chain dehydrogenases/reductases (SDR) family.

Its subcellular location is the endoplasmic reticulum membrane. Putative oxidoreductase. The sequence is that of Dehydrogenase/reductase SDR family member 7B (Dhrs7b) from Rattus norvegicus (Rat).